We begin with the raw amino-acid sequence, 455 residues long: Exodeoxyribonuclease 7 large subunit (455 aa).

It belongs to the XseA family. Heterooligomer composed of large and small subunits.

It is found in the cytoplasm. The enzyme catalyses Exonucleolytic cleavage in either 5'- to 3'- or 3'- to 5'-direction to yield nucleoside 5'-phosphates.. Functionally, bidirectionally degrades single-stranded DNA into large acid-insoluble oligonucleotides, which are then degraded further into small acid-soluble oligonucleotides. In Koribacter versatilis (strain Ellin345), this protein is Exodeoxyribonuclease 7 large subunit.